A 491-amino-acid chain; its full sequence is uncharacterized protein (491 aa).

266-273 (GIQGTGKS) serves as a coordination point for ATP.

The protein belongs to the AAA ATPase family. Highly divergent.

Its subcellular location is the plastid. It is found in the chloroplast. This is an uncharacterized protein from Porphyra purpurea (Red seaweed).